A 121-amino-acid chain; its full sequence is Protein TusC (121 aa).

This sequence belongs to the DsrF/TusC family. In terms of assembly, heterohexamer, formed by a dimer of trimers. The hexameric TusBCD complex contains 2 copies each of TusB, TusC and TusD. The TusBCD complex interacts with TusE.

The protein resides in the cytoplasm. In terms of biological role, part of a sulfur-relay system required for 2-thiolation of 5-methylaminomethyl-2-thiouridine (mnm(5)s(2)U) at tRNA wobble positions. The protein is Protein TusC of Yersinia enterocolitica serotype O:8 / biotype 1B (strain NCTC 13174 / 8081).